The following is a 399-amino-acid chain: UDP-N-acetylglucosamine--N-acetylmuramyl-(pentapeptide) pyrophosphoryl-undecaprenol N-acetylglucosamine transferase (399 aa).

The segment covering 1–21 (MTSRFGHSHHPRRGRSARARA) has biased composition (basic residues). The segment at 1–30 (MTSRFGHSHHPRRGRSARARAGRREGVQSN) is disordered. Residues 58–60 (TGG), Asn170, Arg206, Ser234, Ile288, and Gln333 contribute to the UDP-N-acetyl-alpha-D-glucosamine site.

Belongs to the glycosyltransferase 28 family. MurG subfamily.

The protein resides in the cell inner membrane. It carries out the reaction di-trans,octa-cis-undecaprenyl diphospho-N-acetyl-alpha-D-muramoyl-L-alanyl-D-glutamyl-meso-2,6-diaminopimeloyl-D-alanyl-D-alanine + UDP-N-acetyl-alpha-D-glucosamine = di-trans,octa-cis-undecaprenyl diphospho-[N-acetyl-alpha-D-glucosaminyl-(1-&gt;4)]-N-acetyl-alpha-D-muramoyl-L-alanyl-D-glutamyl-meso-2,6-diaminopimeloyl-D-alanyl-D-alanine + UDP + H(+). Its pathway is cell wall biogenesis; peptidoglycan biosynthesis. In terms of biological role, cell wall formation. Catalyzes the transfer of a GlcNAc subunit on undecaprenyl-pyrophosphoryl-MurNAc-pentapeptide (lipid intermediate I) to form undecaprenyl-pyrophosphoryl-MurNAc-(pentapeptide)GlcNAc (lipid intermediate II). The protein is UDP-N-acetylglucosamine--N-acetylmuramyl-(pentapeptide) pyrophosphoryl-undecaprenol N-acetylglucosamine transferase of Acidovorax ebreus (strain TPSY) (Diaphorobacter sp. (strain TPSY)).